A 1256-amino-acid chain; its full sequence is Centrosome and spindle pole-associated protein 1 (1256 aa).

Coiled-coil stretches lie at residues 38–62 (ADNL…LESD) and 114–135 (EDYE…RRYL). Basic and acidic residues predominate over residues 189-208 (GKEESSEKFRQVEKSTEPKS). Disordered stretches follow at residues 189–244 (GKEE…LTPS) and 381–403 (AENK…CSPF). Positions 222-232 (LTSQIQTSCEN) are enriched in polar residues. Position 244 is a phosphoserine (Ser244). Residues 244–270 (SEAYEELLNQRRLEEDRYRQLDDEIEL) are a coiled coil. A coiled-coil region spans residues 417-449 (QRRKEKYRLELLEQMAEQQRNKRREKDLELRVA). Phosphoserine is present on residues Ser459 and Ser527. The stretch at 625–669 (SKQSLQSYQEALQQQIREREERRKKEREEKEEYEAKLEAEMRTYN) forms a coiled coil. Disordered stretches follow at residues 735–757 (ANKS…VFGE) and 813–853 (EYEE…KKEE). A compositionally biased stretch (polar residues) spans 736–748 (NKSSGHMQTQSSP). Phosphoserine occurs at positions 901 and 920. Residues 913 to 932 (SSMSRAQSPPVPARKNQLRA) form a disordered region. Positions 925 to 964 (ARKNQLRAEEEKKNVIMELSEMRKQLRSEERRLQERLLHM) form a coiled coil. Residue Ser966 is modified to Phosphoserine. 2 disordered regions span residues 1114–1147 (EDDV…RPNV) and 1232–1256 (LNQE…TAHG). Residues 1246-1256 (FTWQGLSTAHG) show a composition bias toward polar residues.

In terms of assembly, interacts with PLEKHG6. Interacts with ARMC9, TOGARAM1, CCDC66, CEP104 and CEP290. In terms of processing, phosphorylated. Phosphorylation increases in colcemide-treated cells. As to expression, expressed in adult and fetal brain with enrichment in the cerebellum. Detected in testis.

Its subcellular location is the cytoplasm. The protein localises to the cytoskeleton. It localises to the microtubule organizing center. The protein resides in the centrosome. It is found in the spindle. Its subcellular location is the spindle pole. The protein localises to the cell projection. It localises to the cilium. Its function is as follows. May play a role in cell-cycle-dependent microtubule organization. This chain is Centrosome and spindle pole-associated protein 1 (CSPP1), found in Homo sapiens (Human).